The following is a 356-amino-acid chain: Histidinol-phosphate aminotransferase 1 (356 aa).

At Lys210 the chain carries N6-(pyridoxal phosphate)lysine.

The protein belongs to the class-II pyridoxal-phosphate-dependent aminotransferase family. Histidinol-phosphate aminotransferase subfamily. As to quaternary structure, homodimer. The cofactor is pyridoxal 5'-phosphate.

It carries out the reaction L-histidinol phosphate + 2-oxoglutarate = 3-(imidazol-4-yl)-2-oxopropyl phosphate + L-glutamate. It participates in amino-acid biosynthesis; L-histidine biosynthesis; L-histidine from 5-phospho-alpha-D-ribose 1-diphosphate: step 7/9. The protein is Histidinol-phosphate aminotransferase 1 of Hydrogenovibrio crunogenus (strain DSM 25203 / XCL-2) (Thiomicrospira crunogena).